A 652-amino-acid chain; its full sequence is Trypanothione synthetase (652 aa).

A Peptidase C51 domain is found at 34–174; sequence SNKHDHFFSG…QHKDGVWTII (141 aa). 328 to 330 is an ATP binding site; sequence RFD. The Mg(2+) site is built by Asp-330, Glu-344, and Asn-346. ATP contacts are provided by residues Lys-513, Lys-548, Gly-555, Gln-583, and 618 to 620; that span reads IIT.

In the C-terminal section; belongs to the glutathionylspermidine synthase preATP-grasp family. It depends on Mg(2+) as a cofactor. Post-translationally, the N-terminus is blocked.

It carries out the reaction spermidine + glutathione + ATP = glutathionylspermidine + ADP + phosphate + H(+). The catalysed reaction is glutathionylspermidine + glutathione + ATP = trypanothione + ADP + phosphate + H(+). Its function is as follows. Conjugates glutathione (gamma-Glu-Cys-Gly) and glutathionylspermidine to form trypanothione (N(1),N(8)-bis(glutathionyl)spermidine), which is involved in maintaining intracellular thiol redox and in defense against oxidants. This chain is Trypanothione synthetase (TRS), found in Crithidia fasciculata.